The sequence spans 389 residues: Phospho-N-acetylmuramoyl-pentapeptide-transferase (389 aa).

The next 10 helical transmembrane spans lie at R25–I45, T73–L93, F97–Y117, F135–A155, I190–A210, G222–M242, G258–W278, V286–I306, I311–V331, and Q366–L386.

The protein belongs to the glycosyltransferase 4 family. MraY subfamily. The cofactor is Mg(2+).

The protein resides in the cell inner membrane. The enzyme catalyses UDP-N-acetyl-alpha-D-muramoyl-L-alanyl-gamma-D-glutamyl-meso-2,6-diaminopimeloyl-D-alanyl-D-alanine + di-trans,octa-cis-undecaprenyl phosphate = di-trans,octa-cis-undecaprenyl diphospho-N-acetyl-alpha-D-muramoyl-L-alanyl-D-glutamyl-meso-2,6-diaminopimeloyl-D-alanyl-D-alanine + UMP. It functions in the pathway cell wall biogenesis; peptidoglycan biosynthesis. Catalyzes the initial step of the lipid cycle reactions in the biosynthesis of the cell wall peptidoglycan: transfers peptidoglycan precursor phospho-MurNAc-pentapeptide from UDP-MurNAc-pentapeptide onto the lipid carrier undecaprenyl phosphate, yielding undecaprenyl-pyrophosphoryl-MurNAc-pentapeptide, known as lipid I. The polypeptide is Phospho-N-acetylmuramoyl-pentapeptide-transferase (Burkholderia pseudomallei (strain 1106a)).